The chain runs to 131 residues: Probable ATP synthase subunit g 2, mitochondrial (131 aa).

Belongs to the ATPase g subunit family. In terms of assembly, subunit of the F-type ATPase which has 2 components, CF(1) - the catalytic core - and CF(0) - the membrane proton channel.

It localises to the mitochondrion membrane. In terms of biological role, mitochondrial membrane ATP synthase (F(1)F(0) ATP synthase or Complex V) produces ATP from ADP in the presence of a proton gradient across the membrane which is generated by electron transport complexes of the respiratory chain. F-type ATPases consist of two structural domains, F(1) - containing the extramembraneous catalytic core, and F(0) - containing the membrane proton channel, linked together by a central stalk and a peripheral stalk. During catalysis, ATP synthesis in the catalytic domain of F(1) is coupled via a rotary mechanism of the central stalk subunits to proton translocation. Part of the complex F(0) domain. Minor subunit located with subunit a in the membrane. The polypeptide is Probable ATP synthase subunit g 2, mitochondrial (Caenorhabditis elegans).